A 690-amino-acid chain; its full sequence is MATENFLIELGTEELPPKALRKLAQAFADNFTAELDKAGLAHQGVQWFAAPRRLALKVAALADKQADKQVEKRGPAVSAAFDAAGNPTPAAAGWAKSNGIEVAQADRLATDKGEWLVYRANVAGQPTTGLLPAMAATALAGLPIPKPMRWGAKRTQFIRPVHTLCMLFGAELVDGEILGLRSARIIRGHRFMGEAQFEISHADQYPALLLEKGKVQADYETRKAFIKAGAEAAAQQLGGIADIEESLLEEVTSLVEWPVILTATFEEKFLAVPAEALVHTMKGDQKYFPVYDNNGKLLPNFIFVSNIESKDPAQIIQGNERVVRPRLSDAEFFFNTDKKHSLASRLESLDTVLFQQQLGTLKDKSVRIAEMSAFIAAQIGADVEHATRAGLLSKCDLMTNMVMEFTDTQGVMGMHYARHDHEAEDVAVALNEQYMPRFAGDNLPNGLVACAVAIADKLDTLAGIFGIGQAPKGDKDPFALRRAAIGTLRIIVEKQLDLDLVDVVSKAAELYDGKISNKSVVDEVVDFMLGRFRASYQEAGIAVDVIQAVLARRPTRPADFDARVKAVSHFRTLDAAEALAAANKRVSNILAKFDGKLKDSVDAALLQDPAEQVLAQQVAAMETKLAPLFANGEYQLALTELAALREAVDTFFDKVMVMADDEALKLNRLTLLARLQALFLQAADISLLQQ.

Belongs to the class-II aminoacyl-tRNA synthetase family. As to quaternary structure, tetramer of two alpha and two beta subunits.

It is found in the cytoplasm. The catalysed reaction is tRNA(Gly) + glycine + ATP = glycyl-tRNA(Gly) + AMP + diphosphate. The chain is Glycine--tRNA ligase beta subunit from Tolumonas auensis (strain DSM 9187 / NBRC 110442 / TA 4).